The primary structure comprises 379 residues: 3-dehydroquinate synthase (379 aa).

It belongs to the archaeal-type DHQ synthase family.

It carries out the reaction 2-amino-2,3,7-trideoxy-D-lyxo-hept-6-ulosonate + NAD(+) + H2O = 3-dehydroquinate + NH4(+) + NADH + H(+). In terms of biological role, catalyzes the oxidative deamination and cyclization of 2-amino-3,7-dideoxy-D-threo-hept-6-ulosonic acid (ADH) to yield 3-dehydroquinate (DHQ), which is fed into the canonical shikimic pathway of aromatic amino acid biosynthesis. This Methanococcoides burtonii (strain DSM 6242 / NBRC 107633 / OCM 468 / ACE-M) protein is 3-dehydroquinate synthase.